The chain runs to 496 residues: Glycerol kinase (496 aa).

An ADP-binding site is contributed by Thr-12. ATP is bound by residues Thr-12, Thr-13, and Ser-14. Position 12 (Thr-12) interacts with sn-glycerol 3-phosphate. ADP is bound at residue Arg-16. Arg-82, Glu-83, and Tyr-134 together coordinate sn-glycerol 3-phosphate. Residues Arg-82, Glu-83, and Tyr-134 each contribute to the glycerol site. Phosphohistidine; by HPr is present on His-230. Residue Asp-244 coordinates sn-glycerol 3-phosphate. The glycerol site is built by Asp-244 and Gln-245. Thr-266 and Gly-309 together coordinate ADP. ATP is bound by residues Thr-266, Gly-309, Gln-313, and Gly-410. Residues Gly-410 and Asn-414 each contribute to the ADP site.

Belongs to the FGGY kinase family. In terms of assembly, homotetramer and homodimer (in equilibrium). Post-translationally, the phosphoenolpyruvate-dependent sugar phosphotransferase system (PTS), including enzyme I, and histidine-containing protein (HPr) are required for the phosphorylation, which leads to the activation of the enzyme.

It carries out the reaction glycerol + ATP = sn-glycerol 3-phosphate + ADP + H(+). It participates in polyol metabolism; glycerol degradation via glycerol kinase pathway; sn-glycerol 3-phosphate from glycerol: step 1/1. Its activity is regulated as follows. Activated by phosphorylation and inhibited by fructose 1,6-bisphosphate (FBP). Its function is as follows. Key enzyme in the regulation of glycerol uptake and metabolism. Catalyzes the phosphorylation of glycerol to yield sn-glycerol 3-phosphate. In Bacillus cereus (strain Q1), this protein is Glycerol kinase.